Consider the following 106-residue polypeptide: Guanylate cyclase activator 2B (106 aa).

The N-terminal stretch at 1 to 21 is a signal peptide; that stretch reads MSRSQLWAAVVLLLLLQSAQG. A propeptide spanning residues 22 to 91 is cleaved from the precursor; sequence VYIKYHGFQV…STFKALRTIA (70 aa). 3 disulfide bridges follow: Cys-62–Cys-75, Cys-95–Cys-103, and Cys-98–Cys-106.

This sequence belongs to the guanylin family. In terms of tissue distribution, localized predominantly in intestinal villi and the corticomedullary junction of the kidney.

The protein localises to the secreted. Its function is as follows. Endogenous activator of intestinal guanylate cyclase. It stimulates this enzyme through the same receptor binding region as the heat-stable enterotoxins. May be a potent physiological regulator of intestinal fluid and electrolyte transport. May be an autocrine/paracrine regulator of intestinal salt and water transport. This is Guanylate cyclase activator 2B (Guca2b) from Mus musculus (Mouse).